A 320-amino-acid polypeptide reads, in one-letter code: Cytochrome f (320 aa).

The N-terminal stretch at 1-35 (MQTRNTFSWIREEITRSISVSLMIYIITWASISSA) is a signal peptide. Heme-binding residues include tyrosine 36, cysteine 56, cysteine 59, and histidine 60. The helical transmembrane segment at 286–305 (VQGLLFFLGSVVLAQIFLVL) threads the bilayer.

The protein belongs to the cytochrome f family. In terms of assembly, the 4 large subunits of the cytochrome b6-f complex are cytochrome b6, subunit IV (17 kDa polypeptide, petD), cytochrome f and the Rieske protein, while the 4 small subunits are PetG, PetL, PetM and PetN. The complex functions as a dimer. Heme is required as a cofactor. In terms of processing, purified from leaves as a water-soluble monomeric protein with a mass of 28.16 kDa, cleavage occurs after Gln-287 and separates the heme-binding from the membrane.

The protein resides in the plastid. The protein localises to the chloroplast thylakoid membrane. Component of the cytochrome b6-f complex, which mediates electron transfer between photosystem II (PSII) and photosystem I (PSI), cyclic electron flow around PSI, and state transitions. The protein is Cytochrome f (petA) of Brassica rapa subsp. rapa (Turnip).